The sequence spans 131 residues: MNISDPLGDMLTRIRNAQMRGMSKTTSPASKLRARVLDVLTDEGYIRGYAEIEKSGHKTLEIELKYYEGQPVISEIKRVSKPGRRVYSSVSDIPLVRNGLGISILSTSQGVMSDNAARAKNVGGEVLCRVF.

The protein belongs to the universal ribosomal protein uS8 family. As to quaternary structure, part of the 30S ribosomal subunit. Contacts proteins S5 and S12.

Functionally, one of the primary rRNA binding proteins, it binds directly to 16S rRNA central domain where it helps coordinate assembly of the platform of the 30S subunit. The protein is Small ribosomal subunit protein uS8 of Hyphomonas neptunium (strain ATCC 15444).